Here is a 163-residue protein sequence, read N- to C-terminus: Nucleotide-binding protein syc0675_c (163 aa).

This sequence belongs to the YajQ family.

Its function is as follows. Nucleotide-binding protein. The chain is Nucleotide-binding protein syc0675_c from Synechococcus sp. (strain ATCC 27144 / PCC 6301 / SAUG 1402/1) (Anacystis nidulans).